Reading from the N-terminus, the 337-residue chain is Protein-methionine-sulfoxide reductase catalytic subunit MsrP (337 aa).

The segment at residues 1-54 (MLIKLPRSSECKASEITPEGIYLSRRTLLGGSLAGLALGALPGGVGAAQMSRYA) is a signal peptide (tat-type signal). Mo-molybdopterin-binding positions include Asn-94, 97–98 (YE), Cys-152, Thr-187, Asn-237, Arg-242, and 253–255 (SIK).

Belongs to the MsrP family. Heterodimer of a catalytic subunit (MsrP) and a heme-binding subunit (MsrQ). It depends on Mo-molybdopterin as a cofactor. Post-translationally, predicted to be exported by the Tat system. The position of the signal peptide cleavage has not been experimentally proven.

The protein localises to the periplasm. It carries out the reaction L-methionyl-[protein] + a quinone + H2O = L-methionyl-(S)-S-oxide-[protein] + a quinol. It catalyses the reaction L-methionyl-[protein] + a quinone + H2O = L-methionyl-(R)-S-oxide-[protein] + a quinol. Part of the MsrPQ system that repairs oxidized periplasmic proteins containing methionine sulfoxide residues (Met-O), using respiratory chain electrons. Thus protects these proteins from oxidative-stress damage caused by reactive species of oxygen and chlorine generated by the host defense mechanisms. MsrPQ is essential for the maintenance of envelope integrity under bleach stress, rescuing a wide series of structurally unrelated periplasmic proteins from methionine oxidation. The catalytic subunit MsrP is non-stereospecific, being able to reduce both (R-) and (S-) diastereoisomers of methionine sulfoxide. This Pseudomonas putida (strain ATCC 47054 / DSM 6125 / CFBP 8728 / NCIMB 11950 / KT2440) protein is Protein-methionine-sulfoxide reductase catalytic subunit MsrP.